The primary structure comprises 341 residues: MSGFIDEVPIQIRAGHGGAGSVHFHKEKFVEFGGPDGGDGGKGGDVIFLAEGRMMTLENYLPDRMYAAQDGEPGLGQNRNGKNGEDLILKVPVGTQIIDSVTMELIYDFNHDGESFTIATGGRGGKGNTFFKTSVQQAPRYSQPGEEGGAFSLILELKLLADIGIVGLPNAGKSTLLAKITHAHPKIAGYAFTTLSPNLGVVHRHEDLFRYTVADIPGIIEGASRGVGLGISFLKHIERVQGILFLFDGGNLQLEEELEMLRSELGNYNQTLLDKKFLLVINKMDIWDNDPSFTEEIQKKYSHLGEIICISADKEFNLEYLLERIDKVFFTEKVKLVYENT.

One can recognise an Obg domain in the interval 2-160; sequence SGFIDEVPIQ…FSLILELKLL (159 aa). The OBG-type G domain maps to 161–330; the sequence is ADIGIVGLPN…LLERIDKVFF (170 aa). Residues 167-174, 192-196, 215-218, 282-285, and 311-313 each bind GTP; these read GLPNAGKS, FTTLS, DIPG, NKMD, and SAD. Mg(2+)-binding residues include serine 174 and threonine 194.

The protein belongs to the TRAFAC class OBG-HflX-like GTPase superfamily. OBG GTPase family. Monomer. The cofactor is Mg(2+).

It localises to the cytoplasm. Its function is as follows. An essential GTPase which binds GTP, GDP and possibly (p)ppGpp with moderate affinity, with high nucleotide exchange rates and a fairly low GTP hydrolysis rate. Plays a role in control of the cell cycle, stress response, ribosome biogenesis and in those bacteria that undergo differentiation, in morphogenesis control. The sequence is that of GTPase Obg from Leptospira biflexa serovar Patoc (strain Patoc 1 / Ames).